We begin with the raw amino-acid sequence, 216 residues long: Probable disulfide bond formation protein D (216 aa).

Residues 1–25 (MKSNKLMALGIVFSIAVLIVIGTIA) form the signal peptide. The cysteines at positions 65 and 68 are disulfide-linked.

It belongs to the thioredoxin family. DsbA subfamily.

May be required for disulfide bond formation in some proteins. In Bacillus cereus (strain ATCC 14579 / DSM 31 / CCUG 7414 / JCM 2152 / NBRC 15305 / NCIMB 9373 / NCTC 2599 / NRRL B-3711), this protein is Probable disulfide bond formation protein D (bdbD).